The chain runs to 491 residues: DEAD-box ATP-dependent RNA helicase 36 (491 aa).

The span at 1–10 (MEEPTPEEEG) shows a compositional bias: acidic residues. The interval 1–56 (MEEPTPEEEGGITIMSKSRKNPKTVVNIQSQKLDSDQNTPQFEKFTNPNPSSDTTS) is disordered. A compositionally biased stretch (polar residues) spans 24–56 (TVVNIQSQKLDSDQNTPQFEKFTNPNPSSDTTS). The Q motif motif lies at 58–86 (TNFEGLGLAEWAVETCKELGMRKPTPVQT). The 174-residue stretch at 89-262 (VPKILAGRDV…EHSSNKAYFY (174 aa)) folds into the Helicase ATP-binding domain. Residue 102–109 (AQTGSGKT) coordinates ATP. The DEAD box motif lies at 210–213 (DEAD). One can recognise a Helicase C-terminal domain in the interval 289-438 (YLVHILSQME…NKKVITDSLE (150 aa)). The disordered stretch occupies residues 471 to 491 (KTLADKGLLKKRGKRQKSTEN). A compositionally biased stretch (basic residues) spans 479-491 (LKKRGKRQKSTEN).

The protein belongs to the DEAD box helicase family. DDX49/DBP8 subfamily.

It carries out the reaction ATP + H2O = ADP + phosphate + H(+). The sequence is that of DEAD-box ATP-dependent RNA helicase 36 (RH36) from Arabidopsis thaliana (Mouse-ear cress).